The chain runs to 459 residues: F-box protein At1g47340 (459 aa).

Positions 31 to 76 (FMVSVSLPKELILEILKRLPAKSVKRFHCVSKQWASMLSCPHFREL) constitute an F-box domain. A disordered region spans residues 434-459 (AKIEWEEEEEEDEDEDQEKEEEDQWS). Residues 438–459 (WEEEEEEDEDEDQEKEEEDQWS) show a composition bias toward acidic residues.

In Arabidopsis thaliana (Mouse-ear cress), this protein is F-box protein At1g47340.